Consider the following 85-residue polypeptide: MAEITEVRIYKSKGNGSVKAYASVSFDNEFVVKGLKVVEGEKGLWVSMPSRRMKDGSFQDVFHPVSREARDKIVDAVLKAYQEQE.

This sequence belongs to the SpoVG family.

Could be involved in septation. In Archaeoglobus fulgidus (strain ATCC 49558 / DSM 4304 / JCM 9628 / NBRC 100126 / VC-16), this protein is Putative septation protein SpoVG.